The following is a 344-amino-acid chain: MATPYVPVPMPIGNSASSFTNNRNQRSSSFGSVSTSSTSSKGQLEDSAVGSLKQTNVQDQMDSASSMCGSPLIRTKFTGTDSSIEYSARPREAEEQHPEAVNWEDRPSTPTILGYEVMEERAKFTVYKILVKKSPEESWVVFRRYTDFSRLNDKLKEMFPGFRLALPPKRWFKDNYNAEFLEDRQLGLQAFLQNLVAHKDIANCLAVREFLCLDDPPGPFDSLEESRAFCETLEETNYHLQRELLEKQKEVESLKKLLGEKQLHIDALETRIRTLSLEPGASLYVSRAEGGQILRVEPSVLQVNRDVLDEESRADHKPHFNSREAGSVIAGIEVAQLAYNAEDD.

The segment covering 1-10 has biased composition (pro residues); that stretch reads MATPYVPVPM. A disordered region spans residues 1–72; the sequence is MATPYVPVPM…SASSMCGSPL (72 aa). Residues 14–26 show a composition bias toward polar residues; the sequence is NSASSFTNNRNQR. The segment covering 27–40 has biased composition (low complexity); it reads SSSFGSVSTSSTSS. Residues 52–68 are compositionally biased toward polar residues; that stretch reads LKQTNVQDQMDSASSMC. The region spanning 105–218 is the PX domain; it reads DRPSTPTILG…EFLCLDDPPG (114 aa). A 1,2-diacyl-sn-glycero-3-phospho-(1D-myo-inositol-3-phosphate)-binding residues include R144, T146, and R184. Position 222 is a phosphoserine (S222). Residues 223–278 are a coiled coil; it reads LEESRAFCETLEETNYHLQRELLEKQKEVESLKKLLGEKQLHIDALETRIRTLSLE.

This sequence belongs to the sorting nexin family. As to quaternary structure, homooligomer. Interacts with EGFR.

Its subcellular location is the early endosome membrane. It localises to the late endosome membrane. The protein resides in the cytoplasm. The protein localises to the lysosome. May be involved in several stages of intracellular trafficking. Plays a role in protein transport from early to late endosomes. Plays a role in protein transport to the lysosome. Promotes degradation of EGFR after EGF signaling. The polypeptide is Sorting nexin-16 (Snx16) (Mus musculus (Mouse)).